We begin with the raw amino-acid sequence, 217 residues long: Probable transaldolase (217 aa).

The active-site Schiff-base intermediate with substrate is Lys83.

Belongs to the transaldolase family. Type 3B subfamily.

Its subcellular location is the cytoplasm. The enzyme catalyses D-sedoheptulose 7-phosphate + D-glyceraldehyde 3-phosphate = D-erythrose 4-phosphate + beta-D-fructose 6-phosphate. It functions in the pathway carbohydrate degradation; pentose phosphate pathway; D-glyceraldehyde 3-phosphate and beta-D-fructose 6-phosphate from D-ribose 5-phosphate and D-xylulose 5-phosphate (non-oxidative stage): step 2/3. Its function is as follows. Transaldolase is important for the balance of metabolites in the pentose-phosphate pathway. The protein is Probable transaldolase (tal) of Methanocaldococcus jannaschii (strain ATCC 43067 / DSM 2661 / JAL-1 / JCM 10045 / NBRC 100440) (Methanococcus jannaschii).